We begin with the raw amino-acid sequence, 1014 residues long: Isoleucine--tRNA ligase (1014 aa).

Residues 48-58 carry the 'HIGH' region motif; it reads PTANGRPGIHH. Residues 628-632 carry the 'KMSKS' region motif; it reads KMSKS. Lysine 631 is a binding site for ATP.

This sequence belongs to the class-I aminoacyl-tRNA synthetase family. IleS type 2 subfamily. In terms of assembly, monomer. Requires Zn(2+) as cofactor.

Its subcellular location is the cytoplasm. It catalyses the reaction tRNA(Ile) + L-isoleucine + ATP = L-isoleucyl-tRNA(Ile) + AMP + diphosphate. Its function is as follows. Catalyzes the attachment of isoleucine to tRNA(Ile). As IleRS can inadvertently accommodate and process structurally similar amino acids such as valine, to avoid such errors it has two additional distinct tRNA(Ile)-dependent editing activities. One activity is designated as 'pretransfer' editing and involves the hydrolysis of activated Val-AMP. The other activity is designated 'posttransfer' editing and involves deacylation of mischarged Val-tRNA(Ile). This is Isoleucine--tRNA ligase from Dehalococcoides mccartyi (strain ATCC BAA-2266 / KCTC 15142 / 195) (Dehalococcoides ethenogenes (strain 195)).